Here is a 162-residue protein sequence, read N- to C-terminus: UPF0114 protein VCM66_0196 (162 aa).

Transmembrane regions (helical) follow at residues 15–35 (IMAP…IKFF), 53–73 (LILV…IVMV), 109–126 (VSAS…KVFM), and 136–156 (IKWY…MGYL).

It belongs to the UPF0114 family.

The protein localises to the cell membrane. The protein is UPF0114 protein VCM66_0196 of Vibrio cholerae serotype O1 (strain M66-2).